Consider the following 273-residue polypeptide: 29 kDa ribonucleoprotein A, chloroplastic (273 aa).

The N-terminal 58 residues, M1–K58, are a transit peptide targeting the chloroplast. The RRM 1 domain maps to L87–P165. Residues R156–G181 form a disordered region. Positions P166–S187 are linker (Gly-rich). The RRM 2 domain maps to N188–A266.

It localises to the plastid. The protein resides in the chloroplast. Functionally, could be involved in splicing and/or processing of chloroplast RNA's. This is 29 kDa ribonucleoprotein A, chloroplastic from Nicotiana sylvestris (Wood tobacco).